The sequence spans 129 residues: Small ribosomal subunit protein uS11c (129 aa).

This sequence belongs to the universal ribosomal protein uS11 family. In terms of assembly, part of the 30S ribosomal subunit.

The protein localises to the plastid. It localises to the chloroplast. The polypeptide is Small ribosomal subunit protein uS11c (Gracilaria tenuistipitata var. liui (Red alga)).